Consider the following 363-residue polypeptide: Protein-arginine kinase (363 aa).

The Phosphagen kinase C-terminal domain maps to 24-254 (IVLSSRIRLA…AQLIEQERSA (231 aa)). 27–31 (SSRIR) serves as a coordination point for ATP. 3 positions are modified to phosphoarginine; by autocatalysis: R29, R40, and R86. Residues H92, R125, and 176–180 (RASVM) each bind ATP. Position 190 is a phosphoarginine; by autocatalysis (R190). Position 207–212 (207–212 (RGIYGE)) interacts with ATP. Residues R255, R269, and R272 each carry the phosphoarginine; by autocatalysis modification. The RDXXRA motif of the pArg binding pocket involved in allosteric regulation signature appears at 337-342 (RDIRRA). Position 346 is a phosphoarginine; by autocatalysis (R346).

This sequence belongs to the ATP:guanido phosphotransferase family. In terms of assembly, interacts with CtsR in its autophosphorylated form. Interacts with McsA in nonstressed as well as in heat-stressed cells, whereas strongly interacts with ClpC only in nonstressed cells. Autophosphorylated on Arg residues. Phosphorylation on Arg-40 and Arg-86 are up-regulated upon stress conditions.

It localises to the cytoplasm. The enzyme catalyses L-arginyl-[protein] + ATP = N(omega)-phospho-L-arginyl-[protein] + ADP + H(+). Appears to be allosterically activated by the binding of pArg-containing polypeptides to the pArg-binding pocket localized in the C-terminal domain of McsB. The McsB kinase is inhibited in nonstressed cells by direct interaction with ClpC; upon heat exposure, the interaction of McsB with ClpC is dramatically decreased, leading to McsB release and activation during heat stress. Its kinase activity is counteracted by the protein-arginine-phosphatase YwlE in vivo. Requires McsA for full kinase activity. Its function is as follows. Catalyzes the specific phosphorylation of arginine residues in a large number of proteins. Is part of the bacterial stress response system, where it is involved in regulating the global heat shock repressor CtsR; phosphorylates arginine residues in the winged helix-turn-helix domain of CtsR, thereby preventing its binding to DNA and consequently inducing the expression of repressed genes. The transcriptional repressor HrcA, the chaperone GroEL, the unfoldase ClpC, together with several ribosomal subunits, represent other physiological targets of McsB under stress conditions. Protein arginine phosphorylation has a physiologically important role and is involved in the regulation of many critical cellular processes, such as protein homeostasis, motility, competence, and stringent and stress responses, by regulating gene expression and protein activity. Functions as an adapter whose kinase activity is required for ClpCP-mediated degradation of CtsR during heat stress. Is required for the delocalization of competence proteins from the cell poles, probably via a role in the degradation of anchor proteins. This is Protein-arginine kinase from Bacillus subtilis (strain 168).